We begin with the raw amino-acid sequence, 280 residues long: uncharacterized protein (280 aa).

Disordered regions lie at residues 1–124 (MPRD…QREA) and 177–280 (LEEE…LSSK). Basic residues-rich tracts occupy residues 16–36 (SRRR…RSRR) and 48–83 (YSRR…RQKS). Composition is skewed to basic and acidic residues over residues 102-124 (AKNR…QREA) and 182-259 (EASL…ERLK).

This is an uncharacterized protein from Arabidopsis thaliana (Mouse-ear cress).